The chain runs to 394 residues: Zinc-regulated GTPase metalloprotein activator 1 (394 aa).

The psi-PxLVp motif motif lies at 16-23 (EDCPELVP). Residue 48–55 (GYLGAGKT) coordinates GTP. The Zn(2+) site is built by Cys106, Cys108, and Cys109. A CXCC motif motif is present at residues 106-109 (CLCC). GTP-binding positions include 109–113 (CSVKD) and 202–205 (NKTD). The CobW C-terminal domain occupies 272–375 (IVTVTFDVPG…ILQQLFITAV (104 aa)).

The protein belongs to the SIMIBI class G3E GTPase family. ZNG1 subfamily.

It is found in the nucleus. It catalyses the reaction GTP + H2O = GDP + phosphate + H(+). In terms of biological role, zinc chaperone that directly transfers zinc cofactor to target metalloproteins, thereby activating them. Catalyzes zinc insertion into the active site of methionine aminopeptidase METAP1, which function to cleave the initiator methionine from polypeptides during or after protein translation. Mechanistically, the N-terminal psi-PxLVp motif binds to the C6H2-type zinc finger of inactive form of METAP1. After formation of the docked complex, zinc is transferred from the CXCC motif in the GTPase domain of ZNG1 to the zinc binding site in the peptidase domain of METAP1 in a process requiring GTP hydrolysis. GTP/GDP exchange is required for release of active METAP1. This chain is Zinc-regulated GTPase metalloprotein activator 1 (Zng1), found in Rattus norvegicus (Rat).